Reading from the N-terminus, the 792-residue chain is Kinesin-related protein 2 (792 aa).

Disordered stretches follow at residues 22 to 50 (TINSRPSLLRKPASSSSQSNDRISYPPST) and 162 to 183 (NNININSNNSSNSNNNILSPVQ). Residues 34–50 (ASSSSQSNDRISYPPST) show a composition bias toward polar residues. Residues 284–423 (RLSLSIQDIK…LEKSRSDEKV (140 aa)) are a coiled coil. A Kinesin motor domain is found at 437–781 (NIRVFCRIRP…LRFAAKVNSC (345 aa)). ATP is bound at residue 528-535 (GQTGSGKT).

This sequence belongs to the TRAFAC class myosin-kinesin ATPase superfamily. Kinesin family. NCD subfamily.

It localises to the nucleus. The protein resides in the cytoplasm. Its subcellular location is the cytoskeleton. It is found in the spindle. In terms of biological role, microtubule-dependent motor that is probably involved in microtubule organization in the mitotic spindle. The chain is Kinesin-related protein 2 (kif2) from Dictyostelium discoideum (Social amoeba).